The primary structure comprises 1400 residues: Tiny macrocysts protein C (1400 aa).

Transmembrane regions (helical) follow at residues 59 to 79 (ILTI…GFKQ), 112 to 132 (IFFW…WYVA), 152 to 172 (FVST…LIGL), 196 to 216 (ANLS…IVGF), 240 to 260 (FDVY…LVDF), 266 to 286 (SIVY…ILPY), 296 to 316 (SGFY…MGIN), and 320 to 340 (TATT…IGYF). Disordered regions lie at residues 367–393 (FNEI…SKVT) and 683–712 (ERSG…RGKY). Residues 369–386 (EITKNEKSKTGDSKEKES) show a composition bias toward basic and acidic residues. Helical transmembrane passes span 726-746 (WLMI…LIVL), 975-995 (TMLY…AVLF), 1162-1182 (VLAI…TYSV), and 1342-1362 (VLTS…LLLF).

Its subcellular location is the membrane. This chain is Tiny macrocysts protein C (tmcC), found in Dictyostelium discoideum (Social amoeba).